The chain runs to 138 residues: ATP synthase epsilon chain (138 aa).

It belongs to the ATPase epsilon chain family. In terms of assembly, F-type ATPases have 2 components, CF(1) - the catalytic core - and CF(0) - the membrane proton channel. CF(1) has five subunits: alpha(3), beta(3), gamma(1), delta(1), epsilon(1). CF(0) has three main subunits: a, b and c.

The protein resides in the cell inner membrane. Its function is as follows. Produces ATP from ADP in the presence of a proton gradient across the membrane. The polypeptide is ATP synthase epsilon chain (Wigglesworthia glossinidia brevipalpis).